A 569-amino-acid chain; its full sequence is AP-4 complex accessory subunit Tepsin (569 aa).

An ENTH domain is found at 8 to 141 (RDRLSFLHRL…FSDALPQPPS (134 aa)). A disordered region spans residues 196–298 (VRPGPDNPCT…SGASREPGDL (103 aa)). A compositionally biased stretch (polar residues) spans 219-229 (VTPSASHTHPN). Positions 260–292 (SSPSSQNSSCTSNLSRASDSVSRSGSDSHSGAS) are enriched in low complexity. Serine 400 carries the phosphoserine modification. Residues 467-524 (VPRSPVPTPSPDTLPPALQDPGELRTQLVCSSEPGTGSEQRLENTDTPKDSSSPCPWS) form a disordered region. Residues 470 to 480 (SPVPTPSPDTL) are compositionally biased toward pro residues. Residues 494-505 (LVCSSEPGTGSE) are compositionally biased toward polar residues. The segment covering 506 to 515 (QRLENTDTPK) has biased composition (basic and acidic residues). The segment at 525 to 535 (PNSLFAGMELV) is interaction with AP4B1. The segment at 559–569 (SEPSAFAFLNM) is interaction with AP4E1.

As to quaternary structure, interacts with AP4B1 and AP4E1; the interaction is direct and mediates the association of TEPSIN with the adapter-like complex 4 (AP-4), a heterotetramer composed of AP4B1, AP4E1, AP4M1 and AP4S1.

It localises to the golgi apparatus. Its subcellular location is the trans-Golgi network membrane. It is found in the cytoplasmic vesicle. The protein localises to the cytoplasm. The protein resides in the cytosol. Associates with the adapter-like complex 4 (AP-4) and may therefore play a role in vesicular trafficking of proteins at the trans-Golgi network. In Rattus norvegicus (Rat), this protein is AP-4 complex accessory subunit Tepsin.